A 671-amino-acid polypeptide reads, in one-letter code: Tail sheath protein (671 aa).

The protein belongs to the myoviridae tail sheath protein family. In terms of assembly, homomultimer.

It is found in the virion. The protein localises to the host cytoplasm. In terms of biological role, polymerizes as an extended structure around the baseplate-tail tube complex. During ejection, the sheath shifts to a contracted form, thereby making the inner tail tube protrude through the host cell envelope. The protein is Tail sheath protein of Vibrio phage KVP40 (isolate Vibrio parahaemolyticus/Japan/Matsuzaki/1991) (KVP40).